The sequence spans 396 residues: Serine/threonine-protein kinase VRK1 (396 aa).

In terms of domain architecture, Protein kinase spans 37–317 (WKVGLPIGQG…LLDYTEKPLY (281 aa)). ATP contacts are provided by residues 43–51 (IGQGGFGCI) and Lys71. Lys71 is covalently cross-linked (Glycyl lysine isopeptide (Lys-Gly) (interchain with G-Cter in SUMO2)). Residue Asp177 is the Proton acceptor of the active site. Position 342 is a phosphoserine; by PLK3 (Ser342). The tract at residues 354–396 (ITKKRKKEIEESKEPGVEDTEWSNTQTEEAIQTRSRTRKRVQK) is disordered. Phosphothreonine; by autocatalysis is present on Thr355. A compositionally biased stretch (basic and acidic residues) spans 360–369 (KEIEESKEPG). Residues 375-387 (WSNTQTEEAIQTR) show a composition bias toward polar residues. Ser376 bears the Phosphoserine mark. Thr378 is subject to Phosphothreonine. The segment at 387-393 (RSRTRKR) is required for interaction with the nucleosome.

The protein belongs to the protein kinase superfamily. CK1 Ser/Thr protein kinase family. VRK subfamily. In terms of assembly, interacts with HDAC1, KAT2B, SETDB1, KDM3A and KDM4A. Associates with the nucleosome through interactions with nucleosome DNA, histone H2A and histone H2B; the interaction with H2A and H2B is mediated by the nucleosome acidic patch, a cluster of negatively charged residues of H2A and H2B forming a cleft within the nucleosome core. (Microbial infection) Interacts with vaccinia protein B12; this interaction inhibits the repressive activity of the vaccinia virus B12 pseudokinase on viral replication factory formation. Autophosphorylated at various serine and threonine residues. Autophosphorylation does not impair its ability to phosphorylate p53/TP53. Phosphorylation by PLK3 leads to induction of Golgi fragmentation during mitosis. Widely expressed. Highly expressed in fetal liver, testis and thymus.

Its subcellular location is the nucleus. It is found in the cytoplasm. It localises to the cajal body. The catalysed reaction is L-seryl-[protein] + ATP = O-phospho-L-seryl-[protein] + ADP + H(+). The enzyme catalyses L-threonyl-[protein] + ATP = O-phospho-L-threonyl-[protein] + ADP + H(+). Active in presence of Mn(2+), Mg(2+) and Zn(2+), but is not functional with Ca(2+) or Cu(2+). Has a higher affinity for Mn(2+) than for Mg(2+). RAN inhibits its autophosphorylation and its ability to phosphorylate histone H3. Serine/threonine kinase involved in the regulation of key cellular processes including the cell cycle, nuclear condensation, transcription regulation, and DNA damage response. Controls chromatin organization and remodeling by mediating phosphorylation of histone H3 on 'Thr-4' and histone H2AX (H2aXT4ph). It also phosphorylates KAT5 in response to DNA damage, promoting KAT5 association with chromatin and histone acetyltransferase activity. Is involved in the regulation of cell cycle progression of neural progenitors, and is required for proper cortical neuronal migration. Is involved in neurite elongation and branching in motor neurons, and has an essential role in Cajal bodies assembly, acting through COIL phosphorylation and the control of coilin degradation. Involved in Golgi disassembly during the cell cycle: following phosphorylation by PLK3 during mitosis, it is required to induce Golgi fragmentation. Phosphorylates BANF1: disrupts its ability to bind DNA, reduces its binding to LEM domain-containing proteins and causes its relocalization from the nucleus to the cytoplasm. Phosphorylates TP53BP1 and p53/TP53 on 'Thr-18', preventing the interaction between p53/TP53 and MDM2. Phosphorylates ATF2 which activates its transcriptional activity. Phosphorylates JUN. In Homo sapiens (Human), this protein is Serine/threonine-protein kinase VRK1.